Consider the following 355-residue polypeptide: 3-isopropylmalate dehydrogenase (355 aa).

Substrate-binding residues include Arg-90, Arg-100, Arg-128, and Asp-222. The Mg(2+) site is built by Asp-222, Asp-246, and Asp-250. Position 280–292 (280–292 (GSAPDIAGKGIAN)) interacts with NAD(+).

This sequence belongs to the isocitrate and isopropylmalate dehydrogenases family. LeuB type 1 subfamily. Homodimer. Mg(2+) is required as a cofactor. Mn(2+) serves as cofactor.

It is found in the cytoplasm. The catalysed reaction is (2R,3S)-3-isopropylmalate + NAD(+) = 4-methyl-2-oxopentanoate + CO2 + NADH. Its pathway is amino-acid biosynthesis; L-leucine biosynthesis; L-leucine from 3-methyl-2-oxobutanoate: step 3/4. Catalyzes the oxidation of 3-carboxy-2-hydroxy-4-methylpentanoate (3-isopropylmalate) to 3-carboxy-4-methyl-2-oxopentanoate. The product decarboxylates to 4-methyl-2 oxopentanoate. The chain is 3-isopropylmalate dehydrogenase from Burkholderia thailandensis (strain ATCC 700388 / DSM 13276 / CCUG 48851 / CIP 106301 / E264).